The following is an 802-amino-acid chain: Pyrophosphate-energized membrane proton pump 2 (802 aa).

Transmembrane regions (helical) follow at residues Val45 to Ser65, Pro66 to Thr86, Tyr118 to Phe138, Val160 to Val180, Ala206 to Tyr226, and Leu246 to Leu266. Lys273 contributes to the substrate binding site. Asp276, Asp280, and Asp306 together coordinate Mg(2+). Transmembrane regions (helical) follow at residues Phe348–Leu368, Met386–Ala406, Trp421–Ile441, Ile468–Val488, and Gly511–Leu531. Mg(2+) contacts are provided by Asp541 and Asn568. 4 helical membrane-spanning segments follow: residues Phe577 to Val597, Val615 to Ala635, Gly686 to Tyr706, and Val716 to Asn736. Mg(2+) contacts are provided by Asp743 and Asp773. Position 776 (Lys776) interacts with substrate. The chain crosses the membrane as a helical span at residues Ser782 to Leu802.

It belongs to the H(+)-translocating pyrophosphatase (TC 3.A.10) family. K(+)-insensitive subfamily. Monomer. Ubiquitous. Mostly expressed in cotyledons, roots and flowers. Especially high levels in trichomes, sepals and stamen filaments.

It is found in the golgi apparatus membrane. It catalyses the reaction diphosphate + H2O + H(+)(in) = 2 phosphate + 2 H(+)(out). Activated by Mg(+) but not by K(+). Inhibited by Ca(2+). Its function is as follows. Pyrophosphatase active in both inorganic pyrophosphate hydrolysis and H(+) translocation. In Arabidopsis thaliana (Mouse-ear cress), this protein is Pyrophosphate-energized membrane proton pump 2 (AVPL1).